A 1378-amino-acid polypeptide reads, in one-letter code: DNA-directed RNA polymerase subunit beta (1378 aa).

It belongs to the RNA polymerase beta chain family. As to quaternary structure, the RNAP catalytic core consists of 2 alpha, 1 beta, 1 beta' and 1 omega subunit. When a sigma factor is associated with the core the holoenzyme is formed, which can initiate transcription.

The catalysed reaction is RNA(n) + a ribonucleoside 5'-triphosphate = RNA(n+1) + diphosphate. Its function is as follows. DNA-dependent RNA polymerase catalyzes the transcription of DNA into RNA using the four ribonucleoside triphosphates as substrates. The protein is DNA-directed RNA polymerase subunit beta of Dinoroseobacter shibae (strain DSM 16493 / NCIMB 14021 / DFL 12).